A 315-amino-acid polypeptide reads, in one-letter code: MDKEQLTTVVEKMLNSIGFKTARVSFRGGCFDLVATRQILLLFIKTLVNIDKFTEEQAEDLKRLAKLFRASALLVGLRTKNIELEDGVVYERFGIYAVNPETLFSILAGTEYPLVMAERGGFFVRIDGERLRELREKYGYSTTELAEMLGVSRKSVQRYEKGEGMVSIDVAIRLEEIFDEPLVKPIDIFKAKIEKVTLSSPPENELEKEVFDRLERLGMSVVKIKRAPFNAVTKEEDEEVNLLTGIDEKKTPSTIRRVRLVNQIAEFVESEGVFVLNEKKTEVVGKVPIIPKDILNKVRDVDELMEIIKELRSST.

Residues 131 to 189 enclose the HTH cro/C1-type domain; it reads LRELREKYGYSTTELAEMLGVSRKSVQRYEKGEGMVSIDVAIRLEEIFDEPLVKPIDIF. The segment at residues 142 to 161 is a DNA-binding region (H-T-H motif); the sequence is TTELAEMLGVSRKSVQRYEK.

This is Putative HTH-type transcriptional regulatory protein PF1851 from Pyrococcus furiosus (strain ATCC 43587 / DSM 3638 / JCM 8422 / Vc1).